The primary structure comprises 709 residues: Nucleobase-ascorbate transporter 12 (709 aa).

The disordered stretch occupies residues 1–145 (MSSSDPKPGP…GSGDPVRRPG (145 aa)). A compositionally biased stretch (pro residues) spans 7–19 (KPGPKPGPWPPTP). Serine 40 carries the phosphoserine modification. A compositionally biased stretch (polar residues) spans 41-53 (GETTATDSSSGQL). Basic and acidic residues-rich tracts occupy residues 89–98 (ETDKDKKEKP) and 113–122 (QPVKRRRDSD). Transmembrane regions (helical) follow at residues 190–210 (YLSM…AMGG), 218–238 (VVST…SFGS), 240–260 (LPLI…IINS), 283–303 (IIIG…SLIL), 308–328 (PVVV…YGFP), 329–349 (LVGK…IFAL), 361–381 (IFLI…AFLL), 438–458 (WGVP…SVIA), 530–550 (GACV…LASI), 551–571 (PQVM…ALGL), 585–605 (IIIV…FQQY), and 639–659 (YVMN…AVIL).

This sequence belongs to the nucleobase:cation symporter-2 (NCS2) (TC 2.A.40) family. In terms of tissue distribution, ubiquitous.

The protein resides in the cell membrane. The chain is Nucleobase-ascorbate transporter 12 (NAT12) from Arabidopsis thaliana (Mouse-ear cress).